A 142-amino-acid polypeptide reads, in one-letter code: Hemoglobin subunit alpha-A (142 aa).

One can recognise a Globin domain in the interval 2–142; that stretch reads VLSAADKTNV…VGAVLTAKYR (141 aa). O2 is bound at residue His59. His88 lines the heme b pocket.

This sequence belongs to the globin family. In terms of assembly, heterotetramer of two alpha chains and two beta chains. In terms of tissue distribution, red blood cells.

Functionally, involved in oxygen transport from the lung to the various peripheral tissues. This chain is Hemoglobin subunit alpha-A (HBAA), found in Anas platyrhynchos (Mallard).